The chain runs to 671 residues: MVNVMNTLSFASLSFNSNNTPVSEQFDDIYFSTQDGLEESYYVFQDGNQLWQKWQTHDVESFVIAETGFGTGLNFLAVADKFQQFLSEFPNSKLKRLYFISFEKFPLTSEQLATIHKNYPQFATLSQKMTACWQPRQTGCQRYHFEQIYLDVWFGDMLDNLPQLGDLYTNRIDAWFLDGFSPDKNPEMWNETLYRQMFSLTKNGGSFATFTAASTVRKGLQAVGFEVKKRKGFGKKREMLWGEKPQQSETAPVNYPYFYSESQTEANDIAVVGGGVASLFVVLSLLEKGKKVTLYCKDNALAQNASGNLQGAIYPQLSDDDERNIRFYVHCFDYALQRLSQIEPLVEFEHALTGVALYAYNDKTAKKLEKIARQTNDDSLFKLCSAAELSEKIGLKVPNGGAFMPQSGWLSPIQFVQGTFAYLQTKGLQIVLNHEVKDPQFSEGKWHWQHNGKTFSHQILVLANGHTLTQFQQAQGIPLYPVRGQVSQIPTTPALQQLKCVVCYDGYLTPVSKANTHCIGASHVRDKAETYFSLEEHHENVAKLQQNLTACDWTQGIDESQNLAKQGVRAALRDRVPMVGQMPNFSVQKVQYQNLYNQLRRKQAVENAANFANLYMVNGLASRGLTTAPLLGEMLASLICDEPLPISEDIWHVLSPNRTWIRKLLKGSKVE.

Positions 1–245 (MVNVMNTLSF…KREMLWGEKP (245 aa)) are tRNA (mnm(5)s(2)U34)-methyltransferase. Residues 272 to 671 (VGGGVASLFV…RKLLKGSKVE (400 aa)) form an FAD-dependent cmnm(5)s(2)U34 oxidoreductase region.

The protein in the N-terminal section; belongs to the methyltransferase superfamily. tRNA (mnm(5)s(2)U34)-methyltransferase family. In the C-terminal section; belongs to the DAO family. The cofactor is FAD.

The protein resides in the cytoplasm. The catalysed reaction is 5-aminomethyl-2-thiouridine(34) in tRNA + S-adenosyl-L-methionine = 5-methylaminomethyl-2-thiouridine(34) in tRNA + S-adenosyl-L-homocysteine + H(+). In terms of biological role, catalyzes the last two steps in the biosynthesis of 5-methylaminomethyl-2-thiouridine (mnm(5)s(2)U) at the wobble position (U34) in tRNA. Catalyzes the FAD-dependent demodification of cmnm(5)s(2)U34 to nm(5)s(2)U34, followed by the transfer of a methyl group from S-adenosyl-L-methionine to nm(5)s(2)U34, to form mnm(5)s(2)U34. In Actinobacillus pleuropneumoniae serotype 3 (strain JL03), this protein is tRNA 5-methylaminomethyl-2-thiouridine biosynthesis bifunctional protein MnmC.